Consider the following 396-residue polypeptide: Mitogen-activated protein kinase mpkC (396 aa).

In terms of domain architecture, Protein kinase spans Y20–L299. ATP-binding positions include V26–V34 and K49. The active-site Proton acceptor is D141. T171 carries the phosphothreonine modification. Positions T171–Y173 match the TXY motif. At Y173 the chain carries Phosphotyrosine.

This sequence belongs to the protein kinase superfamily. Ser/Thr protein kinase family. MAP kinase subfamily. HOG1 sub-subfamily. Mg(2+) is required as a cofactor. In terms of processing, dually phosphorylated on Thr-171 and Tyr-173, which activates the enzyme.

The enzyme catalyses L-seryl-[protein] + ATP = O-phospho-L-seryl-[protein] + ADP + H(+). It catalyses the reaction L-threonyl-[protein] + ATP = O-phospho-L-threonyl-[protein] + ADP + H(+). Activated by tyrosine and threonine phosphorylation. In terms of biological role, mitogen-activated protein kinase required for growth on media where sorbitol or mannitol is the sole carbon source. The chain is Mitogen-activated protein kinase mpkC (mpkC) from Aspergillus niger (strain ATCC MYA-4892 / CBS 513.88 / FGSC A1513).